Consider the following 209-residue polypeptide: Ribosomal RNA large subunit methyltransferase E (209 aa).

Positions 63, 65, 83, 99, and 124 each coordinate S-adenosyl-L-methionine. Lysine 164 serves as the catalytic Proton acceptor.

Belongs to the class I-like SAM-binding methyltransferase superfamily. RNA methyltransferase RlmE family.

Its subcellular location is the cytoplasm. The enzyme catalyses uridine(2552) in 23S rRNA + S-adenosyl-L-methionine = 2'-O-methyluridine(2552) in 23S rRNA + S-adenosyl-L-homocysteine + H(+). In terms of biological role, specifically methylates the uridine in position 2552 of 23S rRNA at the 2'-O position of the ribose in the fully assembled 50S ribosomal subunit. The chain is Ribosomal RNA large subunit methyltransferase E from Shewanella frigidimarina (strain NCIMB 400).